The following is a 259-amino-acid chain: MSLKSIAKQALSLMDLTTLNDNDTDEKVVTLCQQGNTLFGTPAAVCVYPRFIPIARKTLKAQGAEQVKIATVTNFPHGNDDIDIAVAETKAAVAYGADEVDVVFPYRALIAGNEQVGFELVKQCKAVCSANNVALKVIIESGELKTAELIRKASEISIKAGADFIKTSTGKVPVNATLESAHIMLETIRDLGVADSVGFKAAGGVKTTEEAEQYLALTAEILGQDWINQAHFRFGASSLLANLLATLNDEQVNQNVTGY.

Asp101 functions as the Proton donor/acceptor in the catalytic mechanism. The active-site Schiff-base intermediate with acetaldehyde is the Lys166. Catalysis depends on Lys200, which acts as the Proton donor/acceptor.

This sequence belongs to the DeoC/FbaB aldolase family. DeoC type 2 subfamily.

It localises to the cytoplasm. It catalyses the reaction 2-deoxy-D-ribose 5-phosphate = D-glyceraldehyde 3-phosphate + acetaldehyde. Its pathway is carbohydrate degradation; 2-deoxy-D-ribose 1-phosphate degradation; D-glyceraldehyde 3-phosphate and acetaldehyde from 2-deoxy-alpha-D-ribose 1-phosphate: step 2/2. Its function is as follows. Catalyzes a reversible aldol reaction between acetaldehyde and D-glyceraldehyde 3-phosphate to generate 2-deoxy-D-ribose 5-phosphate. This Glaesserella parasuis serovar 5 (strain SH0165) (Haemophilus parasuis) protein is Deoxyribose-phosphate aldolase.